Reading from the N-terminus, the 498-residue chain is Beta-1,3-glucosyltransferase (498 aa).

Topologically, residues 1–6 (MRPPAC) are cytoplasmic. A helical; Signal-anchor for type II membrane protein membrane pass occupies residues 7-27 (WWLLAPPALLALLTCSLAFGL). Residues 28–498 (ASEDTKKEVK…ETQKGFREEL (471 aa)) lie on the Lumenal side of the membrane. An N-linked (GlcNAc...) asparagine glycan is attached at Asn-336. A Prevents secretion from ER motif is present at residues 495–498 (REEL).

The protein belongs to the glycosyltransferase 31 family. In terms of tissue distribution, widely expressed, with highest levels in testis and uterus.

It localises to the endoplasmic reticulum membrane. It functions in the pathway protein modification; protein glycosylation. In terms of biological role, O-glucosyltransferase that transfers glucose toward fucose with a beta-1,3 linkage. Specifically glucosylates O-linked fucosylglycan on TSP type-1 domains of proteins, thereby contributing to elongation of O-fucosylglycan. The polypeptide is Beta-1,3-glucosyltransferase (Homo sapiens (Human)).